The chain runs to 345 residues: MGLAGTKVKQRFGLDPRNTNWSNNNNQFGHQYLTKMGWTPGKGIGLVPDSITTHLKINIKTDNAGLGAKLQKRNKDANELDECSGVDAFQRILGRLNGKEDAVNKVMDMKRDDMIINGKMGIRFVKGEVLSSTWDKEKKALISYANGKNEDKKDKDEVSLLRKRKVEDEEKREVKKSRKDIKEKKEKKEKKEKKEKKEKKEKKEKKEKKEKKEKKEKKEKKEKKEKKEKKEKSDKKEKKEKKDKKEKKEKKEKKEKKEKKEKKEKKEKKEKKEKKEKKEKKDKLDKESSNAANVESTKSLVSDSSRESTPTPIASRLSVRSKWIKQKRASVMDAKALNEIFMISN.

2 disordered regions span residues 1 to 25 (MGLA…SNNN) and 166 to 317 (VEDE…ASRL). One can recognise a G-patch domain in the interval 25-71 (NNQFGHQYLTKMGWTPGKGIGLVPDSITTHLKINIKTDNAGLGAKLQ). A compositionally biased stretch (basic residues) spans 187–227 (KKEKKEKKEKKEKKEKKEKKEKKEKKEKKEKKEKKEKKEKK). Positions 228–237 (EKKEKSDKKE) are enriched in basic and acidic residues. Over residues 238–278 (KKEKKDKKEKKEKKEKKEKKEKKEKKEKKEKKEKKEKKEKK) the composition is skewed to basic residues. Residues 279–288 (EKKDKLDKES) show a composition bias toward basic and acidic residues. Residues 289–312 (SNAANVESTKSLVSDSSRESTPTP) show a composition bias toward polar residues.

This sequence belongs to the PINX1 family.

It is found in the nucleus. Its subcellular location is the nucleolus. Functionally, involved in rRNA-processing at A0, A1 and A2 sites and negatively regulates telomerase. The protein is Protein PXR1 (PXR1) of Lodderomyces elongisporus (strain ATCC 11503 / CBS 2605 / JCM 1781 / NBRC 1676 / NRRL YB-4239) (Yeast).